Consider the following 181-residue polypeptide: Endoribonuclease YbeY (181 aa).

3 residues coordinate Zn(2+): histidine 115, histidine 119, and histidine 125.

Belongs to the endoribonuclease YbeY family. It depends on Zn(2+) as a cofactor.

Its subcellular location is the cytoplasm. Functionally, single strand-specific metallo-endoribonuclease involved in late-stage 70S ribosome quality control and in maturation of the 3' terminus of the 16S rRNA. This chain is Endoribonuclease YbeY, found in Bifidobacterium animalis subsp. lactis (strain AD011).